The sequence spans 219 residues: VQ motif-containing protein 19 (219 aa).

Residues phenylalanine 47–glycine 56 carry the VQ motif. The interval glutamine 52–asparagine 94 is disordered. A phosphoserine mark is found at serine 59, serine 65, serine 127, serine 131, serine 139, serine 141, and serine 152. The residue at position 155 (threonine 155) is a Phosphothreonine. Disordered regions lie at residues proline 156–glutamate 177 and histidine 190–methionine 219. Residues serine 192 and serine 195 each carry the phosphoserine modification. Phosphothreonine occurs at positions 196 and 211. 2 positions are modified to phosphoserine: serine 212 and serine 216.

Phosphorylated on serine and threonine residues by MPK6.

Its subcellular location is the nucleus. Its function is as follows. May modulate WRKY transcription factor activities. This chain is VQ motif-containing protein 19, found in Arabidopsis thaliana (Mouse-ear cress).